A 245-amino-acid polypeptide reads, in one-letter code: Sugar fermentation stimulation protein homolog (245 aa).

The protein belongs to the SfsA family.

This Yersinia pestis bv. Antiqua (strain Nepal516) protein is Sugar fermentation stimulation protein homolog.